The chain runs to 193 residues: dCTP deaminase (193 aa).

Residues 110-115 (RSSLAR), D128, 136-138 (VLE), Y171, K178, and Q182 contribute to the dCTP site. Catalysis depends on E138, which acts as the Proton donor/acceptor. The tract at residues 169–193 (RPYNSRQDAKYRDQQGAVASRIDKD) is disordered.

This sequence belongs to the dCTP deaminase family. As to quaternary structure, homotrimer.

It catalyses the reaction dCTP + H2O + H(+) = dUTP + NH4(+). It participates in pyrimidine metabolism; dUMP biosynthesis; dUMP from dCTP (dUTP route): step 1/2. Its function is as follows. Catalyzes the deamination of dCTP to dUTP. The polypeptide is dCTP deaminase (Serratia proteamaculans (strain 568)).